Reading from the N-terminus, the 162-residue chain is NADH-quinone oxidoreductase subunit I (162 aa).

2 consecutive 4Fe-4S ferredoxin-type domains span residues 52–82 (LRRY…IEAG) and 93–122 (TRYD…EGPN). [4Fe-4S] cluster-binding residues include cysteine 62, cysteine 65, cysteine 68, cysteine 72, cysteine 102, cysteine 105, cysteine 108, and cysteine 112.

This sequence belongs to the complex I 23 kDa subunit family. NDH-1 is composed of 14 different subunits. Subunits NuoA, H, J, K, L, M, N constitute the membrane sector of the complex. [4Fe-4S] cluster is required as a cofactor.

It localises to the cell inner membrane. It carries out the reaction a quinone + NADH + 5 H(+)(in) = a quinol + NAD(+) + 4 H(+)(out). Its function is as follows. NDH-1 shuttles electrons from NADH, via FMN and iron-sulfur (Fe-S) centers, to quinones in the respiratory chain. The immediate electron acceptor for the enzyme in this species is believed to be ubiquinone. Couples the redox reaction to proton translocation (for every two electrons transferred, four hydrogen ions are translocated across the cytoplasmic membrane), and thus conserves the redox energy in a proton gradient. The sequence is that of NADH-quinone oxidoreductase subunit I from Methylobacterium radiotolerans (strain ATCC 27329 / DSM 1819 / JCM 2831 / NBRC 15690 / NCIMB 10815 / 0-1).